Reading from the N-terminus, the 147-residue chain is Ribosome-binding factor A (147 aa).

Positions 127–147 (AAEARHAGEPDPYKTDRDDAE) are disordered.

This sequence belongs to the RbfA family. In terms of assembly, monomer. Binds 30S ribosomal subunits, but not 50S ribosomal subunits or 70S ribosomes.

It localises to the cytoplasm. Its function is as follows. One of several proteins that assist in the late maturation steps of the functional core of the 30S ribosomal subunit. Associates with free 30S ribosomal subunits (but not with 30S subunits that are part of 70S ribosomes or polysomes). Required for efficient processing of 16S rRNA. May interact with the 5'-terminal helix region of 16S rRNA. This chain is Ribosome-binding factor A, found in Nocardia farcinica (strain IFM 10152).